The chain runs to 261 residues: 4-hydroxy-tetrahydrodipicolinate reductase (261 aa).

An NAD(+)-binding site is contributed by 8–13 (GYKGRM). Arginine 36 contacts NADP(+). NAD(+) is bound by residues 95–97 (GTT) and 121–124 (APNF). Histidine 151 serves as the catalytic Proton donor/acceptor. Histidine 152 provides a ligand contact to (S)-2,3,4,5-tetrahydrodipicolinate. Lysine 155 functions as the Proton donor in the catalytic mechanism. Position 161-162 (161-162 (GT)) interacts with (S)-2,3,4,5-tetrahydrodipicolinate.

This sequence belongs to the DapB family.

The protein resides in the cytoplasm. It carries out the reaction (S)-2,3,4,5-tetrahydrodipicolinate + NAD(+) + H2O = (2S,4S)-4-hydroxy-2,3,4,5-tetrahydrodipicolinate + NADH + H(+). It catalyses the reaction (S)-2,3,4,5-tetrahydrodipicolinate + NADP(+) + H2O = (2S,4S)-4-hydroxy-2,3,4,5-tetrahydrodipicolinate + NADPH + H(+). The protein operates within amino-acid biosynthesis; L-lysine biosynthesis via DAP pathway; (S)-tetrahydrodipicolinate from L-aspartate: step 4/4. Functionally, catalyzes the conversion of 4-hydroxy-tetrahydrodipicolinate (HTPA) to tetrahydrodipicolinate. The protein is 4-hydroxy-tetrahydrodipicolinate reductase of Lactiplantibacillus plantarum (strain ATCC BAA-793 / NCIMB 8826 / WCFS1) (Lactobacillus plantarum).